The sequence spans 542 residues: Chaperonin GroEL (542 aa).

ATP-binding positions include 29 to 32 (TMGP), 86 to 90 (DGTTT), Gly-413, 476 to 478 (NAA), and Asp-492. The tract at residues 521-542 (KPDPNANNQAPAAPQGGMGGMM) is disordered. Positions 524-535 (PNANNQAPAAPQ) are enriched in low complexity.

It belongs to the chaperonin (HSP60) family. As to quaternary structure, forms a cylinder of 14 subunits composed of two heptameric rings stacked back-to-back. Interacts with the co-chaperonin GroES.

The protein resides in the cytoplasm. The catalysed reaction is ATP + H2O + a folded polypeptide = ADP + phosphate + an unfolded polypeptide.. In terms of biological role, together with its co-chaperonin GroES, plays an essential role in assisting protein folding. The GroEL-GroES system forms a nano-cage that allows encapsulation of the non-native substrate proteins and provides a physical environment optimized to promote and accelerate protein folding. The sequence is that of Chaperonin GroEL from Limosilactobacillus reuteri subsp. reuteri (strain JCM 1112) (Lactobacillus reuteri).